A 557-amino-acid chain; its full sequence is Protein Red (557 aa).

Residues 1–90 (MPERDSEPFS…YAKLRQQEIE (90 aa)) are disordered. The span at 16-25 (DGHDVDDPHS) shows a compositional bias: basic and acidic residues. The span at 42-53 (TPRAAPTSAPPS) shows a compositional bias: low complexity. An N6-acetyllysine mark is found at K98 and K137. Residue K151 forms a Glycyl lysine isopeptide (Lys-Gly) (interchain with G-Cter in SUMO2) linkage. A disordered region spans residues 181–205 (KEKEEEELMEKPQKETKKDEDPENK). At S287 the chain carries Phosphoserine. Residues 294–303 (RNKKLKKKDK) are compositionally biased toward basic residues. The disordered stretch occupies residues 294–402 (RNKKLKKKDK…PMDVDKGPGS (109 aa)). Basic and acidic residues predominate over residues 304 to 313 (GKLEEKKPPE). Residues K310 and K331 each participate in a glycyl lysine isopeptide (Lys-Gly) (interchain with G-Cter in SUMO2) cross-link. Positions 332 to 398 (TPRDKERERY…VDDEPMDVDK (67 aa)) are enriched in basic and acidic residues. 17 tandem repeats follow at residues 342-343 (RE), 344-345 (RE), 346-347 (RD), 348-349 (RE), 350-351 (RD), 352-353 (RD), 354-355 (RE), 356-357 (RD), 358-359 (RE), 360-361 (RD), 362-363 (RE), 364-365 (RE), 366-367 (RE), 368-369 (RD), 370-371 (RE), 372-373 (RE), and 374-375 (RE). Positions 342 to 375 (RERERDRERDRDRERDRERDRERERERDRERERE) are 17 X 2 AA tandem repeats of R-[ED]. Glycyl lysine isopeptide (Lys-Gly) (interchain with G-Cter in SUMO2) cross-links involve residues K386, K388, K404, and K408. A phosphoserine mark is found at S417 and S460. The residue at position 485 (T485) is a Phosphothreonine. Residues K496, K501, and K509 each participate in a glycyl lysine isopeptide (Lys-Gly) (interchain with G-Cter in SUMO2) cross-link. S536 is modified (phosphoserine). Glycyl lysine isopeptide (Lys-Gly) (interchain with G-Cter in SUMO2) cross-links involve residues K541, K543, and K553.

This sequence belongs to the RED family. As to quaternary structure, component of the spliceosome B complex. Interacts with SMU1. Interacts with MAD1L1. May interact with DHX15. Ubiquitous.

It localises to the nucleus. The protein localises to the nucleoplasm. Its subcellular location is the chromosome. It is found in the cytoplasm. The protein resides in the cytoskeleton. It localises to the spindle pole. Functionally, involved in pre-mRNA splicing as a component of the spliceosome. Auxiliary spliceosomal protein that regulates selection of alternative splice sites in a small set of target pre-mRNA species. Required for normal mitotic cell cycle progression. Recruits MAD1L1 and MAD2L1 to kinetochores, and is required to trigger the spindle assembly checkpoint. Required for normal accumulation of SMU1. In Mus musculus (Mouse), this protein is Protein Red (Ik).